Consider the following 243-residue polypeptide: MSSILLGVNIDHVATLRNARGTKYPDPVHAAEIAERAGAAGITIHLREDRRHIKDRDVRILRETLQTRMNLEMAVTDEMVGIALETKPEFVCLVPEKREELTTEGGLNVSGQLEKVKAATQKLTEAGIKVSLFIDADKEQIDAAVECGAPFIELHTGAYADAETEEAQQDELKKIAAGASYAASKGLIVNAGHGLTYHNVEAIAALPEIYELNIGHSIMGRAMFDGLEKAVADMHRIMLGARK.

Asparagine 9 lines the 3-amino-2-oxopropyl phosphate pocket. 11 to 12 (DH) is a 1-deoxy-D-xylulose 5-phosphate binding site. Arginine 20 contributes to the 3-amino-2-oxopropyl phosphate binding site. Catalysis depends on histidine 45, which acts as the Proton acceptor. 2 residues coordinate 1-deoxy-D-xylulose 5-phosphate: arginine 47 and histidine 52. Glutamate 72 (proton acceptor) is an active-site residue. Threonine 102 contributes to the 1-deoxy-D-xylulose 5-phosphate binding site. The active-site Proton donor is histidine 193. 3-amino-2-oxopropyl phosphate is bound by residues glycine 194 and 215–216 (GH).

This sequence belongs to the PNP synthase family. As to quaternary structure, homooctamer; tetramer of dimers.

It is found in the cytoplasm. It catalyses the reaction 3-amino-2-oxopropyl phosphate + 1-deoxy-D-xylulose 5-phosphate = pyridoxine 5'-phosphate + phosphate + 2 H2O + H(+). Its pathway is cofactor biosynthesis; pyridoxine 5'-phosphate biosynthesis; pyridoxine 5'-phosphate from D-erythrose 4-phosphate: step 5/5. In terms of biological role, catalyzes the complicated ring closure reaction between the two acyclic compounds 1-deoxy-D-xylulose-5-phosphate (DXP) and 3-amino-2-oxopropyl phosphate (1-amino-acetone-3-phosphate or AAP) to form pyridoxine 5'-phosphate (PNP) and inorganic phosphate. The sequence is that of Pyridoxine 5'-phosphate synthase from Aliivibrio fischeri (strain ATCC 700601 / ES114) (Vibrio fischeri).